Here is a 510-residue protein sequence, read N- to C-terminus: O-acetyltransferase pyr7 (510 aa).

It belongs to the fumigaclavine B O-acetyltransferase family.

Its pathway is secondary metabolite biosynthesis; terpenoid biosynthesis. Functionally, O-acetyltransferase; part of the gene cluster that mediates the biosynthesis of pyripyropene A, a specific human acyl-coenzyme A:cholesterol acyltransferase 2 inhibitor. The first step of the pathway is the synthesis of nicotinyl-CoA from nicotinic acid by the nicotinic acid-CoA ligase pyr1. Nicotinyl-CoA is then a substrate of polyketide synthase pyr2 to produce 4-hydroxy-6-(3-pyridinyl)-2H-pyran-2-one (HPPO) which is further prenylated by the polyprenyl transferase pyr6 to yield farnesyl-HPPO. The next steps consist of an epoxidation of farnesyl-HPPO to epoxyfarnesyl-HPPO by FAD-dependent monooxygenase pyr5 and a cyclization of the terpenoid portion by the terpene cyclase pyr4 to yield deacetyl-pyripyropene E. The 2 cytochrome P450 monooxygenases pyr3 and pyr9, and the 2 acetyltransferases pyr7 and pyr8 are involved in the conversion of deacetyl-pyripyropene E into pyripyropene A through several cycles of oxidation and acetylation steps. Pyr7 acetylates deacetyl-pyripyropene E to pyripyropene E which is oxidized to 11-deacetyl-pyripyropene O by pyr3, which is in turn acetylated into pyripyropene O by pyr8. Pyripyropene O is then oxidized to deacetyl-pyripyropene A by pyr9. Deacetyl-pyripyropene A is finally acetylated to pyripyropene A by pyr8. The protein is O-acetyltransferase pyr7 of Aspergillus fumigatus (strain ATCC MYA-4609 / CBS 101355 / FGSC A1100 / Af293) (Neosartorya fumigata).